Reading from the N-terminus, the 184-residue chain is Large ribosomal subunit protein uL5 (184 aa).

It belongs to the universal ribosomal protein uL5 family. Part of the 50S ribosomal subunit; part of the 5S rRNA/L5/L18/L25 subcomplex. Contacts the 5S rRNA and the P site tRNA. Forms a bridge to the 30S subunit in the 70S ribosome.

This is one of the proteins that bind and probably mediate the attachment of the 5S RNA into the large ribosomal subunit, where it forms part of the central protuberance. In the 70S ribosome it contacts protein S13 of the 30S subunit (bridge B1b), connecting the 2 subunits; this bridge is implicated in subunit movement. Contacts the P site tRNA; the 5S rRNA and some of its associated proteins might help stabilize positioning of ribosome-bound tRNAs. The chain is Large ribosomal subunit protein uL5 from Wolinella succinogenes (strain ATCC 29543 / DSM 1740 / CCUG 13145 / JCM 31913 / LMG 7466 / NCTC 11488 / FDC 602W) (Vibrio succinogenes).